We begin with the raw amino-acid sequence, 200 residues long: Glycerol-3-phosphate acyltransferase (200 aa).

5 helical membrane-spanning segments follow: residues 2–22 (FNIS…AVIV), 51–71 (KAAA…VLLA), 84–104 (AIAA…FFGF), 114–134 (LGVL…IWLV), and 159–179 (FFMP…LVLF).

Belongs to the PlsY family. Probably interacts with PlsX.

It is found in the cell inner membrane. It catalyses the reaction an acyl phosphate + sn-glycerol 3-phosphate = a 1-acyl-sn-glycero-3-phosphate + phosphate. It participates in lipid metabolism; phospholipid metabolism. Its function is as follows. Catalyzes the transfer of an acyl group from acyl-phosphate (acyl-PO(4)) to glycerol-3-phosphate (G3P) to form lysophosphatidic acid (LPA). This enzyme utilizes acyl-phosphate as fatty acyl donor, but not acyl-CoA or acyl-ACP. This is Glycerol-3-phosphate acyltransferase from Neisseria meningitidis serogroup C (strain 053442).